Consider the following 167-residue polypeptide: Golgin subfamily A member 7B (167 aa).

2 S-palmitoyl cysteine lipidation sites follow: Cys-78 and Cys-81. Residues 140 to 167 (RCSSGSSSSGSSSGSGSSSAGGGGAGAR) form a disordered region. A compositionally biased stretch (low complexity) spans 142–157 (SSGSSSSGSSSGSGSS). Residues 158–167 (SAGGGGAGAR) are compositionally biased toward gly residues.

It belongs to the ERF4 family. Palmitoylated by ZDHHC5. Palmitoylation is required for the maintenance of ZDHHC5 at the plasma membrane.

It is found in the cell membrane. The protein localises to the golgi apparatus membrane. Its function is as follows. Play a role in cell adhesion by regulating the plasma membrane localization of the palmitoyltransferase ZDHHC5. May be involved in protein transport from Golgi to cell surface. This chain is Golgin subfamily A member 7B (GOLGA7B), found in Mus musculus (Mouse).